A 74-amino-acid chain; its full sequence is MAKETEMEFEGTVVEVLPNAQFKVKLENGVVINAHVSGKIRMHYIRILPGDKVTIVISPYDMTRGRITYRKIGK.

The 72-residue stretch at 1–72 (MAKETEMEFE…TRGRITYRKI (72 aa)) folds into the S1-like domain.

It belongs to the IF-1 family. As to quaternary structure, component of the 30S ribosomal translation pre-initiation complex which assembles on the 30S ribosome in the order IF-2 and IF-3, IF-1 and N-formylmethionyl-tRNA(fMet); mRNA recruitment can occur at any time during PIC assembly.

It localises to the cytoplasm. Its function is as follows. One of the essential components for the initiation of protein synthesis. Stabilizes the binding of IF-2 and IF-3 on the 30S subunit to which N-formylmethionyl-tRNA(fMet) subsequently binds. Helps modulate mRNA selection, yielding the 30S pre-initiation complex (PIC). Upon addition of the 50S ribosomal subunit IF-1, IF-2 and IF-3 are released leaving the mature 70S translation initiation complex. This Mycoplasma capricolum subsp. capricolum (strain California kid / ATCC 27343 / NCTC 10154) protein is Translation initiation factor IF-1.